Consider the following 139-residue polypeptide: ATP synthase epsilon chain (139 aa).

The protein belongs to the ATPase epsilon chain family. In terms of assembly, F-type ATPases have 2 components, CF(1) - the catalytic core - and CF(0) - the membrane proton channel. CF(1) has five subunits: alpha(3), beta(3), gamma(1), delta(1), epsilon(1). CF(0) has three main subunits: a, b and c.

Its subcellular location is the cell membrane. Functionally, produces ATP from ADP in the presence of a proton gradient across the membrane. The polypeptide is ATP synthase epsilon chain (Enterococcus faecalis (strain ATCC 700802 / V583)).